A 171-amino-acid chain; its full sequence is MNHFELFGLPNQFELDGGLLSLQFRELQKRFHPDNFATSSERDRLLSIQKAAQINDAYQTLKNPVSRAEYILSEQGHDIRGEQTTMQDPMFLMQQMELREELESLPSSSDPESALFDFAENVTAMRKSQLVQLQELLKNEAWIEAAQSVRKLKFIEKLNQEVEQLEEKLLG.

The 73-residue stretch at 2–74 folds into the J domain; sequence NHFELFGLPN…VSRAEYILSE (73 aa).

It belongs to the HscB family. As to quaternary structure, interacts with HscA and stimulates its ATPase activity.

Its function is as follows. Co-chaperone involved in the maturation of iron-sulfur cluster-containing proteins. Seems to help targeting proteins to be folded toward HscA. This chain is Co-chaperone protein HscB homolog, found in Aliivibrio fischeri (strain ATCC 700601 / ES114) (Vibrio fischeri).